A 445-amino-acid polypeptide reads, in one-letter code: Protein trichome berefringence-like 7 (445 aa).

A helical; Signal-anchor for type II membrane protein transmembrane segment spans residues I69–V89. Residues G188–S190 carry the GDS motif motif. The DCXHWCLPGXXDXWN motif motif lies at D418–N432.

The protein belongs to the PC-esterase family. TBL subfamily.

It localises to the membrane. Functionally, may act as a bridging protein that binds pectin and other cell wall polysaccharides. Probably involved in maintaining esterification of pectins. May be involved in the specific O-acetylation of cell wall polymers. This Arabidopsis thaliana (Mouse-ear cress) protein is Protein trichome berefringence-like 7 (TBL7).